The primary structure comprises 470 residues: Sorting nexin-17 (470 aa).

Residues 1 to 109 form the PX domain; sequence MHFSIPETES…SFLRRAQQET (109 aa). A 1,2-diacyl-sn-glycero-3-phospho-(1D-myo-inositol-3-phosphate) contacts are provided by arginine 36, serine 38, lysine 62, and arginine 75. Residues 115–206 enclose the Ras-associating domain; the sequence is EEVSLEVLLS…YKIVLRKSYW (92 aa). Residues 115–432 are FERM-like; sequence EEVSLEVLLS…DASRESMVKL (318 aa). Residues 270-432 are PTB-like F3 module; that stretch reads GYLRFDACVA…DASRESMVKL (163 aa). The segment at 401–425 is disordered; the sequence is GGNLRRSDSQQAVKSPPLLESPDAS. A phosphoserine mark is found at serine 407, serine 409, serine 415, serine 421, serine 437, and serine 440.

The protein belongs to the sorting nexin family. As to quaternary structure, monomer. Interacts with APP (via cytoplasmic YXNPXY motif). Interacts with KIF1B. Interacts with the C-termini of P-selectin, PTC, LDLR, VLDLR, LRP1 and LRP8. Interacts with KRIT1 (via N-terminus). Interacts with HRAS. Interacts with ITGB1 and ITGB5 (via NPxY motif). Interacts with CCDC22 and CCDC93; the interaction associates SNX17 with the CCC complex. Interacts (via C-terminus) with VPS26C and VPS35L; the interactions are direct and associate SNX17 with the retriever complex.

It localises to the cytoplasm. Its subcellular location is the early endosome. The protein resides in the cytoplasmic vesicle membrane. Functionally, critical regulator of endosomal recycling of numerous surface proteins, including integrins, signaling receptor and channels. Binds to NPxY sequences in the cytoplasmic tails of target cargos. Associates with retriever and CCC complexes to prevent lysosomal degradation and promote cell surface recycling of numerous cargos such as integrins ITGB1, ITGB5 and their associated alpha subunits. Also required for maintenance of normal cell surface levels of APP and LRP1. Interacts with membranes containing phosphatidylinositol 3-phosphate (PtdIns(3P)). The polypeptide is Sorting nexin-17 (Snx17) (Rattus norvegicus (Rat)).